We begin with the raw amino-acid sequence, 457 residues long: UDP-glycosyltransferase 708C2 (457 aa).

His-32 (proton acceptor) is an active-site residue. An anthocyanidin is bound at residue His-32. Asp-129 serves as the catalytic Charge relay. Thr-150 contacts UDP-alpha-D-glucose. Positions 279-280 (NR) are UDP. Val-341, Gln-343, His-358, Trp-361, Asn-362, Ser-363, and Glu-366 together coordinate UDP-alpha-D-glucose. Residue Gly-381 coordinates an anthocyanidin. UDP-alpha-D-glucose-binding residues include Asp-382 and Gln-383.

This sequence belongs to the UDP-glycosyltransferase family. In terms of tissue distribution, expressed in cotyledons. Not detected in flowers, leaves, roots and hypocotyls.

It catalyses the reaction a 3'-hydro-2'-hydroxy-beta-oxodihydrochalcone + UDP-alpha-D-glucose = a 3'-(beta-D-glucopyranosyl)-2'-hydroxy-beta-oxodihydrochalcone + UDP + H(+). In terms of biological role, UDP-glucose-dependent glucosyltransferase catalyzing the c-glucosylation of 2-hydroxyflavanones (2-hydroxynaringenin, 2-hydroxyeriodictyol and 2-hydroxypinocembrin) and phloretin. No activity with flavanones, flavones or flavonols. The protein is UDP-glycosyltransferase 708C2 of Fagopyrum esculentum (Common buckwheat).